The primary structure comprises 200 residues: Large ribosomal subunit protein uL4 (200 aa).

Residues 42–65 are disordered; the sequence is TRAQKTRSEVSGGGAKPWRQKGTG.

This sequence belongs to the universal ribosomal protein uL4 family. As to quaternary structure, part of the 50S ribosomal subunit.

In terms of biological role, one of the primary rRNA binding proteins, this protein initially binds near the 5'-end of the 23S rRNA. It is important during the early stages of 50S assembly. It makes multiple contacts with different domains of the 23S rRNA in the assembled 50S subunit and ribosome. Its function is as follows. Forms part of the polypeptide exit tunnel. This is Large ribosomal subunit protein uL4 from Aliivibrio fischeri (strain MJ11) (Vibrio fischeri).